The chain runs to 300 residues: N-acetylmuramic acid 6-phosphate etherase (300 aa).

Positions 57–220 constitute an SIS domain; it reads VAAALRAGGR…STGAMIRIGK (164 aa). Residue E85 is the Proton donor of the active site. E116 is an active-site residue.

The protein belongs to the GCKR-like family. MurNAc-6-P etherase subfamily. As to quaternary structure, homodimer.

It carries out the reaction N-acetyl-D-muramate 6-phosphate + H2O = N-acetyl-D-glucosamine 6-phosphate + (R)-lactate. It participates in amino-sugar metabolism; 1,6-anhydro-N-acetylmuramate degradation. It functions in the pathway amino-sugar metabolism; N-acetylmuramate degradation. Its pathway is cell wall biogenesis; peptidoglycan recycling. Its function is as follows. Specifically catalyzes the cleavage of the D-lactyl ether substituent of MurNAc 6-phosphate, producing GlcNAc 6-phosphate and D-lactate. Together with AnmK, is also required for the utilization of anhydro-N-acetylmuramic acid (anhMurNAc) either imported from the medium or derived from its own cell wall murein, and thus plays a role in cell wall recycling. This chain is N-acetylmuramic acid 6-phosphate etherase, found in Klebsiella aerogenes (Enterobacter aerogenes).